A 528-amino-acid polypeptide reads, in one-letter code: MSKKLLKKERDPSILILDFGSQYSELIARRIREADVFSLVVSNFTSVKEIQDINPKGIILSGGPSSVYEDNAPKCDAKIFDLGIPILGICYGMQLMVKELGGEVTPAINKAEYGRAPINIDCESDLLSNVQDKSIMWMSHGDSINNLPEGFIKISHTENTLHAAISNKQKKLFGVQFHPEVIHSEFGMTVIKNFVYSIAKCKADWTTETFLEETIPRIKQQVGDKRVLLALSGGVDSSTLAFLLNKAIGKKLTCMFIDQGFMRKGEPEFLMEFFDKKFHIKVEYINARERFIDKLNGITDPEEKRKIIGREFIRVFEEESNRLGPFQYLAQGTLYPDVIESAGTNLDPKTGERIAVKIKSHHNVGGLPKDLQFKLVEPLRKLFKDEVRKVGGALGLPDEIIKRHPFPGPGLAIRILGDVSHEKLNCLRDADWIVRDEIKKAGLYNDIWQAFAVLLPVKTVGVMGDKRTYAWPIVLRCVSSEDGMTADWSRIPYETLERISNRIVNEVEQVNRVVFDITSKPPGTIEWE.

One can recognise a Glutamine amidotransferase type-1 domain in the interval 13 to 204 (SILILDFGSQ…VYSIAKCKAD (192 aa)). Catalysis depends on C90, which acts as the Nucleophile. Residues H178 and E180 contribute to the active site. The GMPS ATP-PPase domain maps to 205-403 (WTTETFLEET…LGLPDEIIKR (199 aa)). 232–238 (SGGVDSS) lines the ATP pocket.

Homodimer.

The catalysed reaction is XMP + L-glutamine + ATP + H2O = GMP + L-glutamate + AMP + diphosphate + 2 H(+). It participates in purine metabolism; GMP biosynthesis; GMP from XMP (L-Gln route): step 1/1. Catalyzes the synthesis of GMP from XMP. The protein is GMP synthase [glutamine-hydrolyzing] of Prochlorococcus marinus subsp. pastoris (strain CCMP1986 / NIES-2087 / MED4).